We begin with the raw amino-acid sequence, 41 residues long: M-factor (41 aa).

A disordered region spans residues 1-25 (MDSMANTVSSSVVNTGNKPSETLNK). Positions 1 to 29 (MDSMANTVSSSVVNTGNKPSETLNKTVKN) are excised as a propeptide. Cys-38 carries the post-translational modification Cysteine methyl ester. Cys-38 carries S-farnesyl cysteine lipidation. The propeptide at 39 to 41 (VIA) is removed in mature form.

The protein localises to the secreted. In terms of biological role, M-factor is a mating pheromone produced by M-type mating cells. All three mfm genes contribute to the production of M-factor. The sequence is that of M-factor (mfm3) from Schizosaccharomyces pombe (strain 972 / ATCC 24843) (Fission yeast).